The chain runs to 408 residues: Bifunctional enzyme IspD/IspF (408 aa).

The 2-C-methyl-D-erythritol 4-phosphate cytidylyltransferase stretch occupies residues 1 to 247 (MNAPFEKDRR…GPAMTELPDI (247 aa)). Positions 248–408 (RVGNGYDVHG…TVAYPGSLGN (161 aa)) are 2-C-methyl-D-erythritol 2,4-cyclodiphosphate synthase. Residues D254 and H256 each contribute to the a divalent metal cation site. 4-CDP-2-C-methyl-D-erythritol 2-phosphate is bound by residues 254-256 (DVH) and 280-281 (HS). A divalent metal cation is bound at residue H288. 4-CDP-2-C-methyl-D-erythritol 2-phosphate contacts are provided by residues 302-304 (DIG), 378-381 (TTNE), F385, and R388.

It in the N-terminal section; belongs to the IspD/TarI cytidylyltransferase family. IspD subfamily. In the C-terminal section; belongs to the IspF family. A divalent metal cation is required as a cofactor.

It catalyses the reaction 2-C-methyl-D-erythritol 4-phosphate + CTP + H(+) = 4-CDP-2-C-methyl-D-erythritol + diphosphate. The catalysed reaction is 4-CDP-2-C-methyl-D-erythritol 2-phosphate = 2-C-methyl-D-erythritol 2,4-cyclic diphosphate + CMP. The protein operates within isoprenoid biosynthesis; isopentenyl diphosphate biosynthesis via DXP pathway; isopentenyl diphosphate from 1-deoxy-D-xylulose 5-phosphate: step 2/6. It functions in the pathway isoprenoid biosynthesis; isopentenyl diphosphate biosynthesis via DXP pathway; isopentenyl diphosphate from 1-deoxy-D-xylulose 5-phosphate: step 4/6. Functionally, bifunctional enzyme that catalyzes the formation of 4-diphosphocytidyl-2-C-methyl-D-erythritol from CTP and 2-C-methyl-D-erythritol 4-phosphate (MEP) (IspD), and catalyzes the conversion of 4-diphosphocytidyl-2-C-methyl-D-erythritol 2-phosphate (CDP-ME2P) to 2-C-methyl-D-erythritol 2,4-cyclodiphosphate (ME-CPP) with a corresponding release of cytidine 5-monophosphate (CMP) (IspF). In Chelativorans sp. (strain BNC1), this protein is Bifunctional enzyme IspD/IspF.